Here is a 668-residue protein sequence, read N- to C-terminus: UvrABC system protein B (668 aa).

A Helicase ATP-binding domain is found at 25–414; the sequence is RGLHAGARFQ…IVEQLIRPTG (390 aa). Residue 38-45 coordinates ATP; the sequence is GVTGSGKT. Positions 91–114 match the Beta-hairpin motif; it reads YYDYYQPESYVPARDLYIEKDASI. Residues 431-594 enclose the Helicase C-terminal domain; sequence DICQRVKACS…TIKKSIEDIL (164 aa). Residues 627-662 enclose the UVR domain; it reads KKMVQALRLHMKVCARELRFEEAALIRDKILQLQRQ.

The protein belongs to the UvrB family. As to quaternary structure, forms a heterotetramer with UvrA during the search for lesions. Interacts with UvrC in an incision complex.

It is found in the cytoplasm. In terms of biological role, the UvrABC repair system catalyzes the recognition and processing of DNA lesions. A damage recognition complex composed of 2 UvrA and 2 UvrB subunits scans DNA for abnormalities. Upon binding of the UvrA(2)B(2) complex to a putative damaged site, the DNA wraps around one UvrB monomer. DNA wrap is dependent on ATP binding by UvrB and probably causes local melting of the DNA helix, facilitating insertion of UvrB beta-hairpin between the DNA strands. Then UvrB probes one DNA strand for the presence of a lesion. If a lesion is found the UvrA subunits dissociate and the UvrB-DNA preincision complex is formed. This complex is subsequently bound by UvrC and the second UvrB is released. If no lesion is found, the DNA wraps around the other UvrB subunit that will check the other stand for damage. This Treponema pallidum (strain Nichols) protein is UvrABC system protein B.